The chain runs to 255 residues: Large ribosomal subunit protein uL4 (255 aa).

It belongs to the universal ribosomal protein uL4 family. Part of the 50S ribosomal subunit.

In terms of biological role, one of the primary rRNA binding proteins, this protein initially binds near the 5'-end of the 23S rRNA. It is important during the early stages of 50S assembly. It makes multiple contacts with different domains of the 23S rRNA in the assembled 50S subunit and ribosome. Forms part of the polypeptide exit tunnel. The chain is Large ribosomal subunit protein uL4 from Thermococcus kodakarensis (strain ATCC BAA-918 / JCM 12380 / KOD1) (Pyrococcus kodakaraensis (strain KOD1)).